A 579-amino-acid chain; its full sequence is MHPRYSPAPPPQQQQQMGGPPHQQQGGGGGGGGSMRGPSNAQQLPPQIPRSQNYSNGSSSSAAAAPLTSRSAFPGAPLTASAVALKGALPQRPPAMTSPAAAAAGAALAAGAPYRGAASWTPQGYAPAAAAAAAAVAQQAAYRYTAPLPQPAYAAYTPHTATTPATTTYGQRVPTAASPSNTNSSSSSNTGSQSGTLSTSLSNTTNTNTNMGPNGTVQNQNQQGGEQLSKTNLYIRGLQQGTTDKDLVNMCAQYGTIISTKAILDKTTNKCKGYGFVDFEQPAFAECAVKGLQGKGVQAQMAKQQEQDPTNLYIANLPPHFKETDLEAMLSKYGQVVSTRILRDQQMNSKGVGFARMESREKCEQIIQMFNGNTIPGAKDPLLVKFADGGPKKKNLFKTPDPNARAWRDVSAEGIPVAYDPTMQQNGVSVNVGTPIGVPYSRFSAPQVGGYPVAGSQWIPGYMMTTQVDDQTSYSPQYMQMAAAPQLGVTSYKPEAVNQVQPRGISMMVSGDTGVPYGTMMPQLATLQIGNSYISPTYPYYAPPPTIIPTMPMTDSEQASTAASPDEAYTQYPHQAAPK.

The span at 1–12 (MHPRYSPAPPPQ) shows a compositional bias: pro residues. Residues 1-66 (MHPRYSPAPP…GSSSSAAAAP (66 aa)) form a disordered region. Tyrosine 5 is modified (phosphotyrosine). Residues 13 to 24 (QQQQMGGPPHQQ) are compositionally biased toward low complexity. A compositionally biased stretch (gly residues) spans 25–35 (QGGGGGGGGSM). The segment covering 37 to 54 (GPSNAQQLPPQIPRSQNY) has biased composition (polar residues). Residues 55–66 (SNGSSSSAAAAP) are compositionally biased toward low complexity. A phosphotyrosine mark is found at tyrosine 125 and tyrosine 142. Residues 164–225 (PATTTYGQRV…TVQNQNQQGG (62 aa)) are disordered. The span at 178-225 (SPSNTNSSSSSNTGSQSGTLSTSLSNTTNTNTNMGPNGTVQNQNQQGG) shows a compositional bias: low complexity. RRM domains follow at residues 231 to 304 (TNLY…MAKQ) and 310 to 389 (TNLY…FADG). The tract at residues 553 to 579 (MTDSEQASTAASPDEAYTQYPHQAAPK) is disordered.

Functionally, has a role in the perception of gravity. The chain is Protein alan shepard from Drosophila sechellia (Fruit fly).